The chain runs to 367 residues: Hyaluronidase (367 aa).

2 disulfides stabilise this stretch: cysteine 48/cysteine 337 and cysteine 214/cysteine 226. Asparagine 108 carries an N-linked (GlcNAc...) asparagine glycan. The active-site Proton donor is the glutamate 138. The N-linked (GlcNAc...) asparagine glycan is linked to asparagine 354.

Belongs to the glycosyl hydrolase 56 family.

It catalyses the reaction Random hydrolysis of (1-&gt;4)-linkages between N-acetyl-beta-D-glucosamine and D-glucuronate residues in hyaluronate.. Functionally, may play a role in reproduction. This Polistes annularis (Paper wasp) protein is Hyaluronidase.